Here is a 167-residue protein sequence, read N- to C-terminus: Crossover junction endodeoxyribonuclease RuvC (167 aa).

Catalysis depends on residues D11, E71, and D143. Positions 11, 71, and 143 each coordinate Mg(2+).

It belongs to the RuvC family. Homodimer which binds Holliday junction (HJ) DNA. The HJ becomes 2-fold symmetrical on binding to RuvC with unstacked arms; it has a different conformation from HJ DNA in complex with RuvA. In the full resolvosome a probable DNA-RuvA(4)-RuvB(12)-RuvC(2) complex forms which resolves the HJ. Mg(2+) serves as cofactor.

Its subcellular location is the cytoplasm. The enzyme catalyses Endonucleolytic cleavage at a junction such as a reciprocal single-stranded crossover between two homologous DNA duplexes (Holliday junction).. The RuvA-RuvB-RuvC complex processes Holliday junction (HJ) DNA during genetic recombination and DNA repair. Endonuclease that resolves HJ intermediates. Cleaves cruciform DNA by making single-stranded nicks across the HJ at symmetrical positions within the homologous arms, yielding a 5'-phosphate and a 3'-hydroxyl group; requires a central core of homology in the junction. The consensus cleavage sequence is 5'-(A/T)TT(C/G)-3'. Cleavage occurs on the 3'-side of the TT dinucleotide at the point of strand exchange. HJ branch migration catalyzed by RuvA-RuvB allows RuvC to scan DNA until it finds its consensus sequence, where it cleaves and resolves the cruciform DNA. In Bartonella bacilliformis (strain ATCC 35685 / KC583 / Herrer 020/F12,63), this protein is Crossover junction endodeoxyribonuclease RuvC.